A 320-amino-acid polypeptide reads, in one-letter code: Ribose-phosphate pyrophosphokinase 3 (320 aa).

4 residues coordinate Mg(2+): Asp131, His133, Asp142, and Asp146.

This sequence belongs to the ribose-phosphate pyrophosphokinase family.

The protein localises to the cytoplasm. The catalysed reaction is D-ribose 5-phosphate + ATP = 5-phospho-alpha-D-ribose 1-diphosphate + AMP + H(+). The protein operates within metabolic intermediate biosynthesis; 5-phospho-alpha-D-ribose 1-diphosphate biosynthesis; 5-phospho-alpha-D-ribose 1-diphosphate from D-ribose 5-phosphate (route I): step 1/1. 5-phosphoribose 1-diphosphate synthase involved in nucleotide, histidine, and tryptophan biosynthesis. Active in heteromultimeric complexes with other 5-phosphoribose 1-diphosphate synthases (PRS2, PRS3, PRS4 and PRS5). This chain is Ribose-phosphate pyrophosphokinase 3 (PRS3), found in Saccharomyces cerevisiae (strain ATCC 204508 / S288c) (Baker's yeast).